The sequence spans 216 residues: Probable GTP-binding protein EngB (216 aa).

The region spanning 27–201 (EGIEVAFAGR…REKLDTWFSE (175 aa)) is the EngB-type G domain. Residues 35–42 (GRSNAGKS), 62–66 (GRTQL), 80–83 (DLPG), 147–150 (TKAD), and 180–182 (FSS) contribute to the GTP site. The Mg(2+) site is built by Ser-42 and Thr-64.

The protein belongs to the TRAFAC class TrmE-Era-EngA-EngB-Septin-like GTPase superfamily. EngB GTPase family. The cofactor is Mg(2+).

Necessary for normal cell division and for the maintenance of normal septation. This is Probable GTP-binding protein EngB from Yersinia pseudotuberculosis serotype O:1b (strain IP 31758).